Here is a 31-residue protein sequence, read N- to C-terminus: DTTPCGESCVWIPCVSSIVGCSCQNKVCYQN.

Residues 1–31 (DTTPCGESCVWIPCVSSIVGCSCQNKVCYQN) constitute a cross-link (cyclopeptide (Asp-Asn)). 3 disulfide bridges follow: Cys-5–Cys-21, Cys-9–Cys-23, and Cys-14–Cys-28.

Contains 3 disulfide bonds. Post-translationally, this is a cyclic peptide. In terms of tissue distribution, expressed in seed but not in root nodules.

Its function is as follows. Probably participates in a plant defense mechanism. Not active against Gram-negative bacterium E.coli ATCC 700926 or Gram-positive bacterium S.aureus ATCC 12600 up to a concentration of 100 uM under low-salt conditions. This Clitoria ternatea (Butterfly pea) protein is Cliotide T13.